Here is a 117-residue protein sequence, read N- to C-terminus: Inner kinetochore subunit MHF1 (117 aa).

It belongs to the TAF9 family. CENP-S/MHF1 subfamily. The MHF histone-fold complex is a heterotetramer of 2 MHF1-MHF2 heterodimers. Together with MPH1/FANCM, forms the FANCM-MHF complex. Component of the inner kinetochore constitutive centromere-associated network (CCAN).

DsDNA-binding component of a FANCM-MHF complex involved in DNA damage repair and genome maintenance. FANCM-MHF promotes gene conversion at blocked replication forks, probably by reversal of the stalled fork. Component of the kinetochore, a multiprotein complex that assembles on centromeric DNA and attaches chromosomes to spindle microtubules, mediating chromosome segregation and sister chromatid segregation during meiosis and mitosis. Component of the inner kinetochore constitutive centromere-associated network (CCAN), which serves as a structural platform for outer kinetochore assembly. This is Inner kinetochore subunit MHF1 from Candida albicans (strain SC5314 / ATCC MYA-2876) (Yeast).